The primary structure comprises 248 residues: D-xylose 1-dehydrogenase (248 aa).

Positions 42, 68, 91, 156, 160, 189, and 191 each coordinate NAD(+). The Proton acceptor role is filled by Tyr156.

It belongs to the short-chain dehydrogenases/reductases (SDR) family.

The enzyme catalyses D-xylose + NAD(+) = D-xylono-1,5-lactone + NADH + H(+). Functionally, involved in the degradation of D-xylose. Catalyzes the initial reaction in the xylose utilization pathway by oxydizing D-xylose into D-xylonolactone. Shows some activity with L-arabinose and D-lyxose, but D-xylose is clearly the best substrate. Has no activity with D-ribose, D-glucose, D-galactose or D-mannose. This Caulobacter vibrioides (strain ATCC 19089 / CIP 103742 / CB 15) (Caulobacter crescentus) protein is D-xylose 1-dehydrogenase.